The following is a 509-amino-acid chain: Subtelomeric hrmA-associated cluster protein AFUB_078990 (509 aa).

Its function is as follows. Part of the subtelomeric hrmA-associated cluster (HAC) containing genes that alter the hyphal surface (such as reduced total chitin or increased beta-glucan exposure) and perturb inter-hyphal interactions within the developing biofilms, resulting in a loss of vertically aligned polarized growing filaments. Consequently, this hypoxia-typic morphotype (called H-MORPH) with altered biofilm architecture leads to increased hypoxia fitness, increased host inflammation, rapid disease progression, and mortality in a murine model of invasive aspergillosis. This Aspergillus fumigatus (strain CBS 144.89 / FGSC A1163 / CEA10) (Neosartorya fumigata) protein is Subtelomeric hrmA-associated cluster protein AFUB_078990.